A 129-amino-acid chain; its full sequence is Small ribosomal subunit protein uS11 (129 aa).

The segment at 109–129 (VDDTPVPHNGCRPKKKFRKAS) is disordered. Positions 119 to 129 (CRPKKKFRKAS) are enriched in basic residues.

The protein belongs to the universal ribosomal protein uS11 family. In terms of assembly, part of the 30S ribosomal subunit. Interacts with proteins S7 and S18. Binds to the C-terminus of IF-3; however exactly how IF-3 interacts with the 30S subunit is unclear.

Located on the upper part of the platform of the 30S subunit, where it bridges several disparate RNA helices of the 16S rRNA. Forms part of the Shine-Dalgarno cleft in the 70S ribosome. The sequence is that of Small ribosomal subunit protein uS11 (rpsK) from Thermus thermophilus (strain ATCC BAA-163 / DSM 7039 / HB27).